The sequence spans 487 residues: 2-succinylbenzoate--CoA ligase (487 aa).

Belongs to the ATP-dependent AMP-binding enzyme family. MenE subfamily.

It carries out the reaction 2-succinylbenzoate + ATP + CoA = 2-succinylbenzoyl-CoA + AMP + diphosphate. The protein operates within quinol/quinone metabolism; 1,4-dihydroxy-2-naphthoate biosynthesis; 1,4-dihydroxy-2-naphthoate from chorismate: step 5/7. It participates in quinol/quinone metabolism; menaquinone biosynthesis. Functionally, converts 2-succinylbenzoate (OSB) to 2-succinylbenzoyl-CoA (OSB-CoA). This chain is 2-succinylbenzoate--CoA ligase, found in Bacillus velezensis (strain DSM 23117 / BGSC 10A6 / LMG 26770 / FZB42) (Bacillus amyloliquefaciens subsp. plantarum).